The primary structure comprises 181 residues: Probable pyruvoyl-dependent arginine decarboxylase (181 aa).

Pyruvic acid (Ser) is present on Ser43.

It belongs to the PdaD family. It depends on pyruvate as a cofactor.

The catalysed reaction is L-arginine + H(+) = agmatine + CO2. This is Probable pyruvoyl-dependent arginine decarboxylase from Prosthecochloris aestuarii (strain DSM 271 / SK 413).